The chain runs to 226 residues: Holliday junction branch migration complex subunit RuvA (226 aa).

The domain I stretch occupies residues 1–67 (MITSVYAKIE…AINKELYAFK (67 aa)). The domain II stretch occupies residues 68–145 (SLKEKEWFKA…YLKNQIVVSD (78 aa)). Residues 146-167 (KVEPQIDDDEKIDDSKDLNDDE) form a flexible linker region. Residues 168–226 (LLSEIVIEAIDCLISLGYKQEQIKTALAEIDLKNESINDSADLVAVIIKQIGLRTSEVS) form a domain III region.

Belongs to the RuvA family. Homotetramer. Forms an RuvA(8)-RuvB(12)-Holliday junction (HJ) complex. HJ DNA is sandwiched between 2 RuvA tetramers; dsDNA enters through RuvA and exits via RuvB. An RuvB hexamer assembles on each DNA strand where it exits the tetramer. Each RuvB hexamer is contacted by two RuvA subunits (via domain III) on 2 adjacent RuvB subunits; this complex drives branch migration. In the full resolvosome a probable DNA-RuvA(4)-RuvB(12)-RuvC(2) complex forms which resolves the HJ.

It localises to the cytoplasm. The RuvA-RuvB-RuvC complex processes Holliday junction (HJ) DNA during genetic recombination and DNA repair, while the RuvA-RuvB complex plays an important role in the rescue of blocked DNA replication forks via replication fork reversal (RFR). RuvA specifically binds to HJ cruciform DNA, conferring on it an open structure. The RuvB hexamer acts as an ATP-dependent pump, pulling dsDNA into and through the RuvAB complex. HJ branch migration allows RuvC to scan DNA until it finds its consensus sequence, where it cleaves and resolves the cruciform DNA. The chain is Holliday junction branch migration complex subunit RuvA from Mycoplasmoides gallisepticum (strain R(low / passage 15 / clone 2)) (Mycoplasma gallisepticum).